A 126-amino-acid chain; its full sequence is Fluoride-specific ion channel FluC (126 aa).

The next 4 membrane-spanning stretches (helical) occupy residues Ser4 to Ile24, Leu35 to Phe55, Phe68 to Val88, and Ile103 to Leu123. Residues Gly75 and Ser78 each contribute to the Na(+) site.

This sequence belongs to the fluoride channel Fluc/FEX (TC 1.A.43) family.

It is found in the cell inner membrane. It carries out the reaction fluoride(in) = fluoride(out). With respect to regulation, na(+) is not transported, but it plays an essential structural role and its presence is essential for fluoride channel function. Fluoride-specific ion channel. Important for reducing fluoride concentration in the cell, thus reducing its toxicity. This chain is Fluoride-specific ion channel FluC, found in Paraburkholderia xenovorans (strain LB400).